A 304-amino-acid chain; its full sequence is MGINMLDELKEDLVGIDIRFDEPLKRYTYTKVGGPADYLAFPRNRYELFRIVKFANKHNIPWMVLGNASNLIVRDGGIRGFVIMFDKLNGIAVNGYQVEAEAGANLIATTKVACFHSLTGFEFAAGIPGSIGGAVFMNAGAYGGEIAHILVSAQVLTKDGDIRTIDARDMRFGYRRSVLQETGEVVISAKFNLKPGDYEQIKHEMNRLNHLRELKQPLEYPSCGSVFKRPPGHFAGQLIMEANLEGHRIGGVEVSTKHAGFMVNVDQGTAKDYEDLIADVIAKVKENSGVTLEPEVRIIGDKLN.

Residues 31–196 (KVGGPADYLA…ISAKFNLKPG (166 aa)) enclose the FAD-binding PCMH-type domain. Arg175 is an active-site residue. The active-site Proton donor is the Ser225. The active site involves Glu295.

The protein belongs to the MurB family. It depends on FAD as a cofactor.

The protein resides in the cytoplasm. The catalysed reaction is UDP-N-acetyl-alpha-D-muramate + NADP(+) = UDP-N-acetyl-3-O-(1-carboxyvinyl)-alpha-D-glucosamine + NADPH + H(+). The protein operates within cell wall biogenesis; peptidoglycan biosynthesis. Cell wall formation. This Streptococcus thermophilus (strain CNRZ 1066) protein is UDP-N-acetylenolpyruvoylglucosamine reductase.